Here is a 251-residue protein sequence, read N- to C-terminus: POU class 2 homeobox associating factor 3 (251 aa).

The 23-residue stretch at 5–27 (PKVYQGVRVKITVKELLQQRRAH) folds into the OCA domain. The interval 24–45 (RRAHQAASGGTRSGGSSVHLSD) is disordered. Low complexity predominate over residues 31 to 40 (SGGTRSGGSS).

Belongs to the POU2AF family. Interacts with POU2F3 in a DNA-dependent manner; this interaction increases POU2F3 transactivation activity. Expressed in many cell types of epithelial, mesenchymal and hematopoietic origins. Expressed in tufs cells.

The protein localises to the cytoplasm. The protein resides in the nucleus. Its function is as follows. Transcriptional coactivator that specifically associates with POU2F3. This complex drives the development of tuft cells, a rare a rare chemosensory cells that coordinate immune and neural functions within mucosal epithelial tissues. This Homo sapiens (Human) protein is POU class 2 homeobox associating factor 3.